Consider the following 128-residue polypeptide: MRHRKSGRQLNRNSSHRQALFRNLASALVSHEIIKTTLPKAKELRRVVEPLITLAKVDSVANRRLAFARTRNIETVAKLFNELGPRFAQRAGGYTRILKCGFRAGDNAPMAYIELVDRPALAEEAKTE.

The protein belongs to the bacterial ribosomal protein bL17 family. As to quaternary structure, part of the 50S ribosomal subunit. Contacts protein L32.

This chain is Large ribosomal subunit protein bL17, found in Histophilus somni (strain 129Pt) (Haemophilus somnus).